The primary structure comprises 124 residues: Multifunctional methyltransferase subunit TRM112 homolog B (124 aa).

The TRM112 domain occupies 2–120; the sequence is RLIVHNMLSC…SKGIPNMLLH (119 aa).

It belongs to the TRM112 family. In terms of assembly, interacts with TRM9. As to expression, expressed in anthers.

Its function is as follows. Acts as an activator of both rRNA/tRNA and protein methyltransferases. Required for TRM9 tRNA methyltransferase activity. This chain is Multifunctional methyltransferase subunit TRM112 homolog B, found in Arabidopsis thaliana (Mouse-ear cress).